We begin with the raw amino-acid sequence, 82 residues long: Small ribosomal subunit protein bS18 (82 aa).

The tract at residues 1 to 25 is disordered; it reads MKRNNMKRARMEQSRRPKKNPLKAE.

It belongs to the bacterial ribosomal protein bS18 family. In terms of assembly, part of the 30S ribosomal subunit. Forms a tight heterodimer with protein bS6.

Binds as a heterodimer with protein bS6 to the central domain of the 16S rRNA, where it helps stabilize the platform of the 30S subunit. This Corynebacterium urealyticum (strain ATCC 43042 / DSM 7109) protein is Small ribosomal subunit protein bS18.